Consider the following 315-residue polypeptide: Ribosomal RNA small subunit methyltransferase H (315 aa).

Residues 35 to 37, Asp55, Phe84, Asp105, and Gln112 contribute to the S-adenosyl-L-methionine site; that span reads AGH.

This sequence belongs to the methyltransferase superfamily. RsmH family.

The protein localises to the cytoplasm. The enzyme catalyses cytidine(1402) in 16S rRNA + S-adenosyl-L-methionine = N(4)-methylcytidine(1402) in 16S rRNA + S-adenosyl-L-homocysteine + H(+). Functionally, specifically methylates the N4 position of cytidine in position 1402 (C1402) of 16S rRNA. The chain is Ribosomal RNA small subunit methyltransferase H from Streptococcus agalactiae serotype III (strain NEM316).